A 387-amino-acid chain; its full sequence is Phosphoglycerate kinase (387 aa).

Substrate is bound by residues 21-23 (DLN), Arg-36, 59-62 (HLGR), Arg-113, and Arg-146. ATP contacts are provided by residues Lys-197, Glu-314, and 340 to 343 (GGDT).

The protein belongs to the phosphoglycerate kinase family. As to quaternary structure, monomer.

The protein resides in the cytoplasm. The catalysed reaction is (2R)-3-phosphoglycerate + ATP = (2R)-3-phospho-glyceroyl phosphate + ADP. It functions in the pathway carbohydrate degradation; glycolysis; pyruvate from D-glyceraldehyde 3-phosphate: step 2/5. This is Phosphoglycerate kinase from Aeromonas salmonicida (strain A449).